The following is a 220-amino-acid chain: Metalloproteinase inhibitor 2 (220 aa).

The signal sequence occupies residues 1–26 (MGATARSLRLALGLLLLGTLPRGADA). A Zn(2+)-binding site is contributed by C27. 2 involved in metalloproteinase-binding regions span residues 27–30 (CSCS) and 95–96 (SA). 6 disulfides stabilise this stretch: C27-C98, C29-C127, C39-C152, C154-C201, C159-C164, and C172-C193. An NTR domain is found at 27-152 (CSCSPVHPQQ…SLNHRYQMGC (126 aa)).

Belongs to the protease inhibitor I35 (TIMP) family. Interacts (via the C-terminal) with MMP2 (via the C-terminal PEX domain); the interaction inhibits the MMP2 activity. Post-translationally, the activity of TIMP2 is dependent on the presence of disulfide bonds. In terms of tissue distribution, predominantly expressed in the lung in alveolar macrophages and epithelial cells. Also found in brain, kidney, intestine, spleen and heart.

It localises to the secreted. In terms of biological role, complexes with metalloproteinases (such as collagenases) and irreversibly inactivates them by binding to their catalytic zinc cofactor. The sequence is that of Metalloproteinase inhibitor 2 (TIMP2) from Cavia porcellus (Guinea pig).